The primary structure comprises 500 residues: NAD(P)H-quinone oxidoreductase chain 4, chloroplastic (500 aa).

Transmembrane regions (helical) follow at residues 4–24, 37–57, 87–107, 113–130, 134–154, 167–187, 208–228, 242–262, 272–292, 305–325, 330–350, 386–406, 416–436, and 462–482; these read FPWL…IFFL, IFIC…HFQL, IGPI…AWPV, LFHF…GSFS, LLLF…LLSM, FILY…GIGL, ALEI…SPII, HYST…YGLV, AHSI…IYAA, IAYS…SITD, GAIL…FLAG, LALP…GIIT, ILIT…SLSM, and LFVL…PDFV.

This sequence belongs to the complex I subunit 4 family.

The protein resides in the plastid. It localises to the chloroplast thylakoid membrane. It catalyses the reaction a plastoquinone + NADH + (n+1) H(+)(in) = a plastoquinol + NAD(+) + n H(+)(out). It carries out the reaction a plastoquinone + NADPH + (n+1) H(+)(in) = a plastoquinol + NADP(+) + n H(+)(out). This Vitis vinifera (Grape) protein is NAD(P)H-quinone oxidoreductase chain 4, chloroplastic.